Consider the following 469-residue polypeptide: 6-phosphofructo-2-kinase/fructose-2,6-bisphosphatase 4 (469 aa).

The interval 1-249 (MASPRELTQN…YYLMNIHVTP (249 aa)) is 6-phosphofructo-2-kinase. 46-54 (GLPARGKTY) provides a ligand contact to ATP. The beta-D-fructose 6-phosphate site is built by Arg79 and Arg103. Residue Asp129 is part of the active site. Positions 131 and 137 each coordinate beta-D-fructose 6-phosphate. Cys159 is a catalytic residue. 168–173 (NIVQVK) provides a ligand contact to ATP. The beta-D-fructose 6-phosphate site is built by Lys173, Arg194, and Tyr198. Residues 250-469 (RSIYLCRHGE…EALVTVPAHQ (220 aa)) form a fructose-2,6-bisphosphatase region. Residue Arg256 participates in beta-D-fructose 2,6-bisphosphate binding. His257 (tele-phosphohistidine intermediate) is an active-site residue. Positions 263, 269, and 306 each coordinate beta-D-fructose 2,6-bisphosphate. Glu326 functions as the Proton donor/acceptor in the catalytic mechanism. Tyr337, Arg351, Lys355, Tyr366, Gln392, and Arg396 together coordinate beta-D-fructose 2,6-bisphosphate. An ATP-binding site is contributed by 348 to 351 (FALR). Residues 392 to 396 (QAVMR) and Tyr428 each bind ATP. The residue at position 444 (Thr444) is a Phosphothreonine; by PKC.

In the C-terminal section; belongs to the phosphoglycerate mutase family. As to quaternary structure, homodimer.

It carries out the reaction beta-D-fructose 2,6-bisphosphate + H2O = beta-D-fructose 6-phosphate + phosphate. It catalyses the reaction beta-D-fructose 6-phosphate + ATP = beta-D-fructose 2,6-bisphosphate + ADP + H(+). With respect to regulation, the most important regulatory mechanism of these opposing activities is by phosphorylation and dephosphorylation of the enzyme. In terms of biological role, synthesis and degradation of fructose 2,6-bisphosphate. This Macaca fascicularis (Crab-eating macaque) protein is 6-phosphofructo-2-kinase/fructose-2,6-bisphosphatase 4 (PFKFB4).